A 1276-amino-acid chain; its full sequence is cGMP-specific 3',5'-cyclic phosphodiesterase (1276 aa).

3 disordered regions span residues 1-76 (MHEL…TAAG), 91-185 (NQVK…QQDV), and 241-260 (ASPTVQQKSPRSLSNSSASS). Low complexity-rich tracts occupy residues 12–47 (SSSSSSSSSSNMTDVSAAAGGATAPAETAATSSSAS) and 57–76 (TSTAMAAPTTTPTTAATAAG). Residues 109-124 (APYPPVPAAKPKPTPT) show a composition bias toward pro residues. A compositionally biased stretch (basic and acidic residues) spans 129–140 (SKFKSTSREVDV). Positions 147–166 (ARSSTISPGVSIHTQTIQQE) are enriched in polar residues. Composition is skewed to low complexity over residues 167–180 (SSSAKPGMSSSSSS) and 249–260 (SPRSLSNSSASS). 2 consecutive GAF domains span residues 290 to 442 (DIDV…GIGI) and 474 to 658 (NLEC…GLGI). The 432-residue stretch at 688–1119 (SQDQTEKLTQ…RNWQDLAEKV (432 aa)) folds into the PDEase domain. Residue histidine 764 is the Proton donor of the active site. 4 residues coordinate a divalent metal cation: histidine 768, histidine 804, aspartate 805, and aspartate 1023. Disordered stretches follow at residues 1162-1193 (AQHGAGAGGDDSHTPEHQRSGSRLSMKKTGAL) and 1205-1276 (LYNS…CSLL). 2 stretches are compositionally biased toward basic and acidic residues: residues 1171–1180 (DDSHTPEHQR) and 1221–1233 (LESHVSEDMDDKS). Residues 1248-1263 (GRMSASSSTSSAGTVV) are compositionally biased toward low complexity. The span at 1266-1276 (SKKRSKLCSLL) shows a compositional bias: basic residues. Cysteine methyl ester is present on cysteine 1273. A lipid anchor (S-farnesyl cysteine) is attached at cysteine 1273. A propeptide spans 1274 to 1276 (SLL) (removed in mature form).

Belongs to the cyclic nucleotide phosphodiesterase family. In terms of assembly, interacts with PrBP. The cofactor is a divalent metal cation.

It localises to the cell membrane. The catalysed reaction is 3',5'-cyclic GMP + H2O = GMP + H(+). Its function is as follows. Has a role regulating cGMP transport in Malpighian tubule principal cells. The chain is cGMP-specific 3',5'-cyclic phosphodiesterase from Drosophila persimilis (Fruit fly).